The following is a 130-amino-acid chain: Small ribosomal subunit protein uS9 (130 aa).

A disordered region spans residues 98–130; the sequence is LKRAGLLTRDPRMKERKKPGLKKARRSPQFSKR. Positions 111 to 130 are enriched in basic residues; sequence KERKKPGLKKARRSPQFSKR.

It belongs to the universal ribosomal protein uS9 family.

The sequence is that of Small ribosomal subunit protein uS9 from Staphylococcus haemolyticus (strain JCSC1435).